The chain runs to 698 residues: MTPIVKSFQYGEHTVTLETGVMARQATAAVMCSMDDTCVFVSVVGKNADNQERDFFPLTVNYQEKTYAAGKIPGGFFKREGRPSEDETLIARLIDRPVRPLFPAGFKNEVQVIATVVSINPEVNPDVVAMIATSAALSISGMPFKGPIGCARVGYKEGEYLLNPTKTELETSDLNLVVSGTDNAVLMVESEAGILSEDVMLGAVVFGHDQQQIVVESIKEFAAEVARPAWNWAAPARNEALDAAIATEAQARFEQAYQISDKGDRYDAIKAITSEVKEKLLASDETLEAKQIGEYLHDLEKTVVRTRIIKGEPRIDGRDPESIRALDVRTGVLPRTHGSALFTRGETQALVTATLGTQRDAQIIDSIMGEKKDNFLLHYNFPPYCVGETGFVGSPKRREIGHGRLAKRGVLAVMPSLEEFPYTVRVVSEITESNGSSSMASVCGASLALMDAGVPLKASVAGIAMGLVKEGEEFVVLSDILGDEDHLGDMDFKVAGTTEGITALQMDIKIEGITREIMQIALNQAKAARLHILTVMDQALPQGRADISQFAPRIHTIKINTDKIRDVIGKGGAVIRSLCEETGTTIEIEDDGTVKIAATSGEQADDAINRIKALTAEVEVGTIYTGKVVRLADFGAFVNILPGKDGLVHISQICEERVQKVSDHLKEGQEVKVKVLEVDRQGRVRLSIKEAAEKTTAE.

2 residues coordinate Mg(2+): D485 and D491. Positions 552-611 (PRIHTIKINTDKIRDVIGKGGAVIRSLCEETGTTIEIEDDGTVKIAATSGEQADDAINRI) constitute a KH domain. Residues 621-689 (GTIYTGKVVR…RQGRVRLSIK (69 aa)) enclose the S1 motif domain.

It belongs to the polyribonucleotide nucleotidyltransferase family. Component of the RNA degradosome, which is a multiprotein complex involved in RNA processing and mRNA degradation. The cofactor is Mg(2+).

The protein localises to the cytoplasm. It catalyses the reaction RNA(n+1) + phosphate = RNA(n) + a ribonucleoside 5'-diphosphate. Functionally, involved in mRNA degradation. Catalyzes the phosphorolysis of single-stranded polyribonucleotides processively in the 3'- to 5'-direction. In Psychromonas ingrahamii (strain DSM 17664 / CCUG 51855 / 37), this protein is Polyribonucleotide nucleotidyltransferase.